Consider the following 271-residue polypeptide: Extent of cell elongation protein 1 (271 aa).

A signal peptide spans 1 to 18 (MKFSKIACATVFALSSQA). The chain crosses the membrane as a helical span at residues 62–82 (SIIGIIMGILGNIPQVIQIIM).

Polymerizes in solution to form membrane pores. Post-translationally, cleavage by KEX2 generates 8 peptides ECE1-I to ECE1-VIII, all terminating in Lys-Arg. Only peptide ECE1-III, called candidalysin, shows toxin activity.

The protein resides in the secreted. Its subcellular location is the host cell membrane. Its function is as follows. Secreted protein cleaved by KEX2 in 8 similar peptides (ECE1-I to ECE1-VIII). Stimulates biofilm formation. Acts as a cytolytic peptide toxin that directly damages host epithelial membranes, triggers a danger response signaling pathway and activates epithelial immunity. Polymerizes in solution to form membrane pores to damage epithelial cells. Induces calcium influx, oxidative stress, mitochondrial dysfunction and ATP depletion in host cells, leading to epithelial necrosis. Serves as a danger signal that potentiates the immune response, and more specifically IL-17 response. Induces cytokine/chemokine secretion by host (especially CCL2/3/4, CXCL1 and S100A8), neutrophil recruitment, and promotes mortality in zebrafish and murine models of systemic fungal infection. Mediates distinct epithelial inflammatory responses through p38, EGFR-ERK and TREM-1/DAP12 pathways. Acts as one of the hypha-derived drivers of NLRP3 inflammasome responses in primary macrophages and thus contributes to the capacity to induce maturation and secretion of IL-1beta from primary macrophages. Stimulates mast cells by mediating cross-talk between signaling pathways activated by the dectin-1 receptor and MAPKs. Enables escape via the gasdermin-mediated pyroptosis, as well as a cell lysis pathway associated with macrophage extracellular trap formation termed ETosis. Acts as the main hemolytic factor of C.albicans. As an exotoxine, also promotes alcohol-associated liver disease or oral carcinogenesis. The chain is Extent of cell elongation protein 1 from Candida albicans (strain SC5314 / ATCC MYA-2876) (Yeast).